A 423-amino-acid chain; its full sequence is Growth hormone-releasing hormone receptor (423 aa).

Positions 1 to 22 are cleaved as a signal peptide; that stretch reads MDGLMWATRILCLLSLCGVTLG. At 23 to 130 the chain is on the extracellular side; sequence HLHLECDFIT…KEKSYFSTVK (108 aa). 3 cysteine pairs are disulfide-bonded: C41–C64, C55–C96, and C78–C112. N-linked (GlcNAc...) asparagine glycosylation is found at N49 and N50. A helical membrane pass occupies residues 131-151; that stretch reads IIYTTGHSISIVALCVAIAIL. Residues 152-167 lie on the Cytoplasmic side of the membrane; it reads VALRRLHCPRNYIHTQ. Residues 168–188 form a helical membrane-spanning segment; it reads LFATFILKASAVFLKDAAIFQ. Residues 189-210 are Extracellular-facing; that stretch reads GDSTDHCSMSTVLCKVSVAISH. A helical transmembrane segment spans residues 211-231; that stretch reads LATMTNFSWLLAEAVYLSCLL. Residues 232–240 lie on the Cytoplasmic side of the membrane; the sequence is ASTSPRSKP. Residues 241–261 traverse the membrane as a helical segment; it reads AFWWLVLAGWGLPVLCTGTWV. Topologically, residues 262-283 are extracellular; that stretch reads GCKLAFEDTECWDLDNSSPCWW. The chain crosses the membrane as a helical span at residues 284 to 304; it reads IIKGPIVLSVGVNFGLFLNII. Over 305–331 the chain is Cytoplasmic; that stretch reads CILLRKLEPAQGGLHTRAQYWRLSKST. A helical transmembrane segment spans residues 332-352; that stretch reads LLLIPLFGIHYIIFNFLPDSA. The Extracellular segment spans residues 353–357; it reads GLDIR. A helical membrane pass occupies residues 358–378; it reads VPLELGLGSFQGFIVAVLYCF. The Cytoplasmic segment spans residues 379–423; the sequence is LNQEVRTEISRKWYGHDPELLPARRTCTEWTTPPRSRLKVLTSEC.

It belongs to the G-protein coupled receptor 2 family. Pituitary gland.

It is found in the cell membrane. Its function is as follows. Receptor for GRF, coupled to G proteins which activate adenylyl cyclase. Stimulates somatotroph cell growth, growth hormone gene transcription and growth hormone secretion. The sequence is that of Growth hormone-releasing hormone receptor (Ghrhr) from Mus musculus (Mouse).